Reading from the N-terminus, the 285-residue chain is (3S)-malyl-CoA thioesterase (285 aa).

The substrate site is built by Arg70 and Glu122. Mg(2+) is bound by residues Glu122 and Asp148.

The protein belongs to the HpcH/HpaI aldolase family. As to quaternary structure, homodimer or homotrimer. The cofactor is Mg(2+).

The enzyme catalyses (S)-malyl-CoA + H2O = (S)-malate + CoA + H(+). Its activity is regulated as follows. Reversibly inhibited by EDTA. Stimulated by the divalent cations Mg(2+) and Mn(2+). Catalyzes the hydrolysis of (3S)-malyl-CoA to (3S)-malate and free CoA. Inactive towards beta-methylmalyl-CoA and other CoA esters. The protein is (3S)-malyl-CoA thioesterase of Cereibacter sphaeroides (strain ATCC 17023 / DSM 158 / JCM 6121 / CCUG 31486 / LMG 2827 / NBRC 12203 / NCIMB 8253 / ATH 2.4.1.) (Rhodobacter sphaeroides).